We begin with the raw amino-acid sequence, 313 residues long: Syndecan-1 (313 aa).

Residues M1 to P22 form the signal peptide. Residues Q23–G257 lie on the Extracellular side of the membrane. Disordered stretches follow at residues A27–S58 and A95–G186. Residues E32–D42 are compositionally biased toward acidic residues. An O-linked (Xyl...) (chondroitin sulfate) serine glycan is attached at S37. N43 carries N-linked (GlcNAc...) asparagine glycosylation. O-linked (Xyl...) (heparan sulfate) serine glycosylation is found at S45 and S47. Residues E97 to E129 are compositionally biased toward basic and acidic residues. The span at V135–S154 shows a compositional bias: low complexity. O-linked (Xyl...) (chondroitin sulfate) serine glycosylation is found at S209 and S219. Residues G258–L278 traverse the membrane as a helical segment. Residues Y279 to A313 are Cytoplasmic-facing. Positions E286–K295 are enriched in basic and acidic residues. The disordered stretch occupies residues E286–A313. The residue at position 288 (S288) is a Phosphoserine.

The protein belongs to the syndecan proteoglycan family. Interacts with CDCP1. Interacts (via C-terminus) with TIAM1 (via PDZ domain). Interacts with MDK. Post-translationally, shedding is enhanced by a number of factors such as heparanase, thrombin or EGF. Also by stress and wound healing. PMA-mediated shedding is inhibited by TIMP3.

It localises to the membrane. The protein localises to the secreted. The protein resides in the extracellular exosome. Cell surface proteoglycan that contains both heparan sulfate and chondroitin sulfate and that links the cytoskeleton to the interstitial matrix. Regulates exosome biogenesis in concert with SDCBP and PDCD6IP. Able to induce its own expression in dental mesenchymal cells and also in the neighboring dental epithelial cells via an MSX1-mediated pathway. The polypeptide is Syndecan-1 (Rattus norvegicus (Rat)).